A 234-amino-acid chain; its full sequence is Large ribosomal subunit protein uL1 (234 aa).

It belongs to the universal ribosomal protein uL1 family. As to quaternary structure, part of the 50S ribosomal subunit.

Its function is as follows. Binds directly to 23S rRNA. The L1 stalk is quite mobile in the ribosome, and is involved in E site tRNA release. Protein L1 is also a translational repressor protein, it controls the translation of the L11 operon by binding to its mRNA. This Klebsiella pneumoniae (strain 342) protein is Large ribosomal subunit protein uL1.